Here is a 638-residue protein sequence, read N- to C-terminus: Plasma kallikrein (638 aa).

A signal peptide spans 1 to 19 (MILFKQVGYFVSLFATVSC). 4 Apple domains span residues 21–104 (CLSQ…LKQC), 111–194 (CHQD…LKSC), 201–284 (CPMD…LFTC), and 292–375 (CHFK…LRLC). Cystine bridges form between C21-C104, C47-C77, C51-C57, C111-C194, C137-C166, C141-C147, C201-C284, C227-C256, C231-C237, C292-C375, C318-C347, C322-C328, C340-C345, C383-C503, C419-C435, C517-C584, C548-C563, and C574-C602. N127 carries an N-linked (GlcNAc...) asparagine glycan. A glycan (N-linked (GlcNAc...) asparagine) is linked at N215. N-linked (GlcNAc...) asparagine glycosylation is present at N308. In terms of domain architecture, Peptidase S1 spans 391–626 (IVGGTNSSLG…YIDWILEKIQ (236 aa)). A glycan (N-linked (GlcNAc...) asparagine) is linked at N396. The Charge relay system role is filled by H434. N453 carries an N-linked (GlcNAc...) asparagine glycan. D483 acts as the Charge relay system in catalysis. The N-linked (GlcNAc...) asparagine glycan is linked to N494. S578 (charge relay system) is an active-site residue.

It belongs to the peptidase S1 family. Plasma kallikrein subfamily. Forms a heterodimer with SERPINA5. The zymogen is activated by factor XIIa, which cleaves the molecule into a light chain, which contains the active site, and a heavy chain, which associates with HMW kininogen. These chains are linked by one or more disulfide bonds.

The protein resides in the secreted. The enzyme catalyses Cleaves selectively Arg-|-Xaa and Lys-|-Xaa bonds, including Lys-|-Arg and Arg-|-Ser bonds in (human) kininogen to release bradykinin.. With respect to regulation, inhibited by SERPINA5. Its function is as follows. The enzyme cleaves Lys-Arg and Arg-Ser bonds. It activates, in a reciprocal reaction, factor XII after its binding to a negatively charged surface. It also releases bradykinin from HMW kininogen and may also play a role in the renin-angiotensin system by converting prorenin into renin. The chain is Plasma kallikrein (Klkb1) from Rattus norvegicus (Rat).